The following is a 154-amino-acid chain: MPKGDGKLIAQNKKARHDYSIIDTMEAGMVLQGTEIKSIRNSRINLKDGFVRIRNGEAFLHNVHISPYEQGNIFNHDPLRTRKLLLHKKQISRLETETKNTGVTIVPLKVYIRDGYAKVLIGLAKGKKSYDKREDLKRKDVDRQIDRTLKNFSR.

The protein belongs to the SmpB family.

Its subcellular location is the cytoplasm. In terms of biological role, required for rescue of stalled ribosomes mediated by trans-translation. Binds to transfer-messenger RNA (tmRNA), required for stable association of tmRNA with ribosomes. tmRNA and SmpB together mimic tRNA shape, replacing the anticodon stem-loop with SmpB. tmRNA is encoded by the ssrA gene; the 2 termini fold to resemble tRNA(Ala) and it encodes a 'tag peptide', a short internal open reading frame. During trans-translation Ala-aminoacylated tmRNA acts like a tRNA, entering the A-site of stalled ribosomes, displacing the stalled mRNA. The ribosome then switches to translate the ORF on the tmRNA; the nascent peptide is terminated with the 'tag peptide' encoded by the tmRNA and targeted for degradation. The ribosome is freed to recommence translation, which seems to be the essential function of trans-translation. This Enterococcus hirae (strain ATCC 9790 / DSM 20160 / JCM 8729 / LMG 6399 / NBRC 3181 / NCIMB 6459 / NCDO 1258 / NCTC 12367 / WDCM 00089 / R) protein is SsrA-binding protein.